A 257-amino-acid polypeptide reads, in one-letter code: Thiazole synthase (257 aa).

The active-site Schiff-base intermediate with DXP is the lysine 100. 1-deoxy-D-xylulose 5-phosphate is bound by residues glycine 161, 187-188 (AG), and 209-210 (NT).

Belongs to the ThiG family. As to quaternary structure, homotetramer. Forms heterodimers with either ThiH or ThiS.

The protein resides in the cytoplasm. The catalysed reaction is [ThiS sulfur-carrier protein]-C-terminal-Gly-aminoethanethioate + 2-iminoacetate + 1-deoxy-D-xylulose 5-phosphate = [ThiS sulfur-carrier protein]-C-terminal Gly-Gly + 2-[(2R,5Z)-2-carboxy-4-methylthiazol-5(2H)-ylidene]ethyl phosphate + 2 H2O + H(+). The protein operates within cofactor biosynthesis; thiamine diphosphate biosynthesis. Catalyzes the rearrangement of 1-deoxy-D-xylulose 5-phosphate (DXP) to produce the thiazole phosphate moiety of thiamine. Sulfur is provided by the thiocarboxylate moiety of the carrier protein ThiS. In vitro, sulfur can be provided by H(2)S. The chain is Thiazole synthase from Zymomonas mobilis subsp. mobilis (strain ATCC 31821 / ZM4 / CP4).